A 245-amino-acid polypeptide reads, in one-letter code: Carboxy-S-adenosyl-L-methionine synthase (245 aa).

S-adenosyl-L-methionine is bound by residues Tyr42, 67–69 (GCS), 92–93 (DN), 120–121 (DI), Asn135, and Arg202.

The protein belongs to the class I-like SAM-binding methyltransferase superfamily. Cx-SAM synthase family. As to quaternary structure, homodimer.

It catalyses the reaction prephenate + S-adenosyl-L-methionine = carboxy-S-adenosyl-L-methionine + 3-phenylpyruvate + H2O. In terms of biological role, catalyzes the conversion of S-adenosyl-L-methionine (SAM) to carboxy-S-adenosyl-L-methionine (Cx-SAM). This is Carboxy-S-adenosyl-L-methionine synthase from Vibrio campbellii (strain ATCC BAA-1116).